The chain runs to 212 residues: N-(5'-phosphoribosyl)anthranilate isomerase (212 aa).

This sequence belongs to the TrpF family.

The enzyme catalyses N-(5-phospho-beta-D-ribosyl)anthranilate = 1-(2-carboxyphenylamino)-1-deoxy-D-ribulose 5-phosphate. It participates in amino-acid biosynthesis; L-tryptophan biosynthesis; L-tryptophan from chorismate: step 3/5. This is N-(5'-phosphoribosyl)anthranilate isomerase from Cereibacter sphaeroides (strain ATCC 17029 / ATH 2.4.9) (Rhodobacter sphaeroides).